The chain runs to 676 residues: UvrABC system protein B (676 aa).

In terms of domain architecture, Helicase ATP-binding spans 35–192 (QGVADGLMYQ…ARLVAMQYTR (158 aa)). 48 to 55 (GVTGSGKT) lines the ATP pocket. A Beta-hairpin motif is present at residues 101-124 (YYDYYQPEAYVPTRDLFIEKDSSV). In terms of domain architecture, Helicase C-terminal spans 439–605 (QVDDLLGEIR…GVNKAVRELI (167 aa)). Residues 634–669 (AREIKRLEKLMMDHARNLEFEQAAAARDALTALKNR) form the UVR domain.

Belongs to the UvrB family. As to quaternary structure, forms a heterotetramer with UvrA during the search for lesions. Interacts with UvrC in an incision complex.

It is found in the cytoplasm. In terms of biological role, the UvrABC repair system catalyzes the recognition and processing of DNA lesions. A damage recognition complex composed of 2 UvrA and 2 UvrB subunits scans DNA for abnormalities. Upon binding of the UvrA(2)B(2) complex to a putative damaged site, the DNA wraps around one UvrB monomer. DNA wrap is dependent on ATP binding by UvrB and probably causes local melting of the DNA helix, facilitating insertion of UvrB beta-hairpin between the DNA strands. Then UvrB probes one DNA strand for the presence of a lesion. If a lesion is found the UvrA subunits dissociate and the UvrB-DNA preincision complex is formed. This complex is subsequently bound by UvrC and the second UvrB is released. If no lesion is found, the DNA wraps around the other UvrB subunit that will check the other stand for damage. This chain is UvrABC system protein B, found in Bordetella avium (strain 197N).